Consider the following 83-residue polypeptide: Cytochrome b559 subunit alpha (83 aa).

A helical transmembrane segment spans residues 21-35 (VIHSITIPSLFIAGW). Residue H23 participates in heme binding.

It belongs to the PsbE/PsbF family. As to quaternary structure, heterodimer of an alpha subunit and a beta subunit. PSII is composed of 1 copy each of membrane proteins PsbA, PsbB, PsbC, PsbD, PsbE, PsbF, PsbH, PsbI, PsbJ, PsbK, PsbL, PsbM, PsbT, PsbX, PsbY, PsbZ, Psb30/Ycf12, at least 3 peripheral proteins of the oxygen-evolving complex and a large number of cofactors. It forms dimeric complexes. It depends on heme b as a cofactor.

It localises to the plastid membrane. In terms of biological role, this b-type cytochrome is tightly associated with the reaction center of photosystem II (PSII). PSII is a light-driven water:plastoquinone oxidoreductase that uses light energy to abstract electrons from H(2)O, generating O(2) and a proton gradient subsequently used for ATP formation. It consists of a core antenna complex that captures photons, and an electron transfer chain that converts photonic excitation into a charge separation. The protein is Cytochrome b559 subunit alpha of Cuscuta reflexa (Southern Asian dodder).